A 298-amino-acid chain; its full sequence is (S)-ureidoglycine aminohydrolase (298 aa).

Residues 1 to 20 form the signal peptide; it reads MRSLYLIVFIVISLVKASKS. Residues 222–288 form the Cupin type-2 domain; the sequence is TMDFQPGEFL…ALGKTRSRYL (67 aa). Residues glutamate 235, histidine 237, histidine 241, and glutamine 275 each coordinate Mn(2+). Glutamate 235 provides a ligand contact to substrate. 3 residues coordinate substrate: glutamine 275, tyrosine 287, and lysine 291.

The protein belongs to the UGHY family. As to quaternary structure, homooctamer. It depends on Mn(2+) as a cofactor.

It is found in the endoplasmic reticulum. The enzyme catalyses (S)-2-ureidoglycine + H2O = (S)-ureidoglycolate + NH4(+). Functionally, involved in the catabolism of purine nucleotides. Can use (S)-2-ureidoglycine as substrate, but not allantoate. The sequential activity of AAH, UGLYAH and UAH allows a complete purine breakdown without the intermediate generation of urea. This Arabidopsis thaliana (Mouse-ear cress) protein is (S)-ureidoglycine aminohydrolase (UGLYAH).